Here is a 466-residue protein sequence, read N- to C-terminus: Asparagine--tRNA ligase (466 aa).

The protein belongs to the class-II aminoacyl-tRNA synthetase family. As to quaternary structure, homodimer.

It is found in the cytoplasm. The enzyme catalyses tRNA(Asn) + L-asparagine + ATP = L-asparaginyl-tRNA(Asn) + AMP + diphosphate + H(+). The polypeptide is Asparagine--tRNA ligase (Yersinia pseudotuberculosis serotype O:1b (strain IP 31758)).